The sequence spans 459 residues: Cysteine--tRNA ligase (459 aa).

A Zn(2+)-binding site is contributed by Cys-31. A 'HIGH' region motif is present at residues 33-43 (PTVYYNPHIGN). Residues Cys-216, His-241, and Glu-245 each coordinate Zn(2+). The short motif at 274–278 (KMSKS) is the 'KMSKS' region element. An ATP-binding site is contributed by Lys-277.

Belongs to the class-I aminoacyl-tRNA synthetase family. As to quaternary structure, monomer. It depends on Zn(2+) as a cofactor.

The protein localises to the cytoplasm. The catalysed reaction is tRNA(Cys) + L-cysteine + ATP = L-cysteinyl-tRNA(Cys) + AMP + diphosphate. This is Cysteine--tRNA ligase from Rickettsia peacockii (strain Rustic).